Consider the following 526-residue polypeptide: Probable fucosyltransferase 7 (526 aa).

Residues 1 to 4 lie on the Cytoplasmic side of the membrane; it reads MKTK. A helical; Signal-anchor for type II membrane protein transmembrane segment spans residues 5-25; that stretch reads LMITIFSCLLLWSMLLLLSFS. Over 26-526 the chain is Lumenal; it reads NIFKHQLLGA…KLVDDTKNEL (501 aa). N-linked (GlcNAc...) asparagine glycans are attached at residues N211, N215, and N363.

It belongs to the glycosyltransferase 37 family. Expressed in roots, leaves, stems and seedlings.

Its subcellular location is the golgi apparatus. The protein localises to the golgi stack membrane. The protein operates within protein modification; protein glycosylation. Functionally, may be involved in cell wall biosynthesis. May act as a fucosyltransferase. In Arabidopsis thaliana (Mouse-ear cress), this protein is Probable fucosyltransferase 7 (FUT7).